Consider the following 158-residue polypeptide: Cyclic pyranopterin monophosphate synthase (158 aa).

Substrate contacts are provided by residues 75 to 77 (LCH) and 113 to 114 (ME). Residue D128 is part of the active site.

It belongs to the MoaC family. In terms of assembly, homohexamer; trimer of dimers.

The enzyme catalyses (8S)-3',8-cyclo-7,8-dihydroguanosine 5'-triphosphate = cyclic pyranopterin phosphate + diphosphate. The protein operates within cofactor biosynthesis; molybdopterin biosynthesis. Functionally, catalyzes the conversion of (8S)-3',8-cyclo-7,8-dihydroguanosine 5'-triphosphate to cyclic pyranopterin monophosphate (cPMP). In Actinobacillus succinogenes (strain ATCC 55618 / DSM 22257 / CCUG 43843 / 130Z), this protein is Cyclic pyranopterin monophosphate synthase.